Reading from the N-terminus, the 132-residue chain is Small ribosomal subunit protein uS17c (132 aa).

A compositionally biased stretch (low complexity) spans 1–11; it reads MLLLSSPFVSV. 2 disordered regions span residues 1–23 and 104–132; these read MLLL…SHGA and PLPP…SSRE. The N-terminal 31 residues, 1–31, are a transit peptide targeting the chloroplast; that stretch reads MLLLSSPFVSVSPPPPPLSSHGARPALRIEA. Residues 122 to 132 are compositionally biased toward acidic residues; the sequence is SDDDQEPSSRE.

This sequence belongs to the universal ribosomal protein uS17 family. Part of the 30S ribosomal subunit.

The protein resides in the plastid. It is found in the chloroplast. In terms of biological role, one of the primary rRNA binding proteins, it binds specifically to the 5'-end of 16S ribosomal RNA. In the hcf60 mutation the Activator tag is inserted 17 base pars upstream of the initiation codon. This mutation is seedling lethal, due to plastid ribosome insufficiency. However under non-light stressed conditions photosynthesis and oxygen evolution can occur. This Zea mays (Maize) protein is Small ribosomal subunit protein uS17c (RPS17).